The sequence spans 35 residues: Photosystem II reaction center protein M (35 aa).

A helical membrane pass occupies residues 5–25 (ILGLIATALFILIPTSFLIIL).

This sequence belongs to the PsbM family. PSII is composed of 1 copy each of membrane proteins PsbA, PsbB, PsbC, PsbD, PsbE, PsbF, PsbH, PsbI, PsbJ, PsbK, PsbL, PsbM, PsbT, PsbX, PsbY, PsbZ, Psb30/Ycf12, at least 3 peripheral proteins of the oxygen-evolving complex and a large number of cofactors. It forms dimeric complexes.

Its subcellular location is the plastid. It is found in the chloroplast thylakoid membrane. One of the components of the core complex of photosystem II (PSII). PSII is a light-driven water:plastoquinone oxidoreductase that uses light energy to abstract electrons from H(2)O, generating O(2) and a proton gradient subsequently used for ATP formation. It consists of a core antenna complex that captures photons, and an electron transfer chain that converts photonic excitation into a charge separation. This subunit is found at the monomer-monomer interface. This Oltmannsiellopsis viridis (Marine flagellate) protein is Photosystem II reaction center protein M.